The chain runs to 99 residues: DNA-directed RNA polymerase subunit Rpo11 (99 aa).

Belongs to the archaeal Rpo11/eukaryotic RPB11/RPC19 RNA polymerase subunit family. As to quaternary structure, part of the RNA polymerase complex. Forms an Rpo3-Rpo10-Rpo11-Rpo12 complex upon coexpression.

Its subcellular location is the cytoplasm. The enzyme catalyses RNA(n) + a ribonucleoside 5'-triphosphate = RNA(n+1) + diphosphate. Its function is as follows. DNA-dependent RNA polymerase (RNAP) catalyzes the transcription of DNA into RNA using the four ribonucleoside triphosphates as substrates. This is DNA-directed RNA polymerase subunit Rpo11 from Methanocaldococcus jannaschii (strain ATCC 43067 / DSM 2661 / JAL-1 / JCM 10045 / NBRC 100440) (Methanococcus jannaschii).